We begin with the raw amino-acid sequence, 450 residues long: UDP-N-acetylmuramoylalanine--D-glutamate ligase (450 aa).

ATP is bound at residue 119-125; it reads GSNGKTT.

Belongs to the MurCDEF family.

It localises to the cytoplasm. The enzyme catalyses UDP-N-acetyl-alpha-D-muramoyl-L-alanine + D-glutamate + ATP = UDP-N-acetyl-alpha-D-muramoyl-L-alanyl-D-glutamate + ADP + phosphate + H(+). The protein operates within cell wall biogenesis; peptidoglycan biosynthesis. Its function is as follows. Cell wall formation. Catalyzes the addition of glutamate to the nucleotide precursor UDP-N-acetylmuramoyl-L-alanine (UMA). In Bacillus cereus (strain AH187), this protein is UDP-N-acetylmuramoylalanine--D-glutamate ligase.